A 616-amino-acid polypeptide reads, in one-letter code: Sulfite reductase [NADPH] hemoprotein beta-component (616 aa).

Over residues 1–10 (MDDHSPRDAA) the composition is skewed to basic and acidic residues. A disordered region spans residues 1-35 (MDDHSPRDAAETPAPGPAATPAKRVYETPPTSRPI). Residues 11–22 (ETPAPGPAATPA) show a composition bias toward low complexity. Residues C470, C476, C515, and C519 each coordinate [4Fe-4S] cluster. Position 519 (C519) interacts with siroheme.

It belongs to the nitrite and sulfite reductase 4Fe-4S domain family. In terms of assembly, alpha(8)-beta(8). The alpha component is a flavoprotein, the beta component is a hemoprotein. Requires siroheme as cofactor. The cofactor is [4Fe-4S] cluster.

It catalyses the reaction hydrogen sulfide + 3 NADP(+) + 3 H2O = sulfite + 3 NADPH + 4 H(+). Its pathway is sulfur metabolism; hydrogen sulfide biosynthesis; hydrogen sulfide from sulfite (NADPH route): step 1/1. Component of the sulfite reductase complex that catalyzes the 6-electron reduction of sulfite to sulfide. This is one of several activities required for the biosynthesis of L-cysteine from sulfate. This is Sulfite reductase [NADPH] hemoprotein beta-component from Methylobacterium radiotolerans (strain ATCC 27329 / DSM 1819 / JCM 2831 / NBRC 15690 / NCIMB 10815 / 0-1).